Reading from the N-terminus, the 657-residue chain is THO complex subunit 1 (657 aa).

Residue M1 is modified to N-acetylmethionine. A Phosphoserine modification is found at S2. T4 bears the Phosphothreonine mark. K31 participates in a covalent cross-link: Glycyl lysine isopeptide (Lys-Gly) (interchain with G-Cter in SUMO2). K133 carries the N6-acetyllysine modification. The segment at 133–167 is dock domain; interaction with THOC2; that stretch reads KNYLLRMCNDLLRRLSKSQNTVFCGRIQLFLARLF. The disordered stretch occupies residues 194–221; sequence QESTLGQKHTEDREEGMDVEEGEMGDDE. Residues 206–221 are compositionally biased toward acidic residues; sequence REEGMDVEEGEMGDDE. The dock domain; interaction with THOC2 stretch occupies residues 227-397; that stretch reads SIPIDYNLYR…WNSWKNEGCP (171 aa). K300 is subject to N6-acetyllysine. K408 is covalently cross-linked (Glycyl lysine isopeptide (Lys-Gly) (interchain with G-Cter in SUMO2)). The Nuclear localization signal motif lies at 414–430; the sequence is RKRAAPEDFLGKGPNKK. Residues 533 to 569 form a disordered region; the sequence is LPPPSEEIKTGEDEDEEDNDALLKENESPDVRRDKPI. At S537 the chain carries Phosphoserine. T542 bears the Phosphothreonine mark. Over residues 553–569 the composition is skewed to basic and acidic residues; the sequence is ALLKENESPDVRRDKPI. Residue S560 is modified to Phosphoserine. Residues 570–653 form the Death domain; sequence TGEQIESFAN…DLAESLTNDT (84 aa). A Glycyl lysine isopeptide (Lys-Gly) (interchain with G-Cter in SUMO2) cross-link involves residue K580. K595 is covalently cross-linked (Glycyl lysine isopeptide (Lys-Gly) (interchain with G-Cter in SUMO1); alternate). Residue K595 forms a Glycyl lysine isopeptide (Lys-Gly) (interchain with G-Cter in SUMO2); alternate linkage.

The protein belongs to the THOC1 family. In terms of assembly, component of the THO subcomplex, which is composed of THOC1, THOC2, THOC3, THOC5, THOC6 and THOC7. The THO subcomplex interacts with DDX39B to form the THO-DDX39B complex which multimerizes into a 28-subunit tetrameric assembly. Component of the transcription/export (TREX) complex at least composed of ALYREF/THOC4, DDX39B, SARNP/CIP29, CHTOP and the THO subcomplex; in the complex interacts with THOC2, THOC5 and THOC7. TREX seems to have a dynamic structure involving ATP-dependent remodeling. Binds to the hypophosphorylated form of RB1. Interacts with RNA polymerase II. Interacts with LUZP4. Interacts with THOC5. In terms of processing, expression is altered specifically during apoptosis and is accompanied by the appearance of novel forms with smaller apparent molecular mass. Post-translationally, polyubiquitinated, leading to proteasomal degradation; probably involves NEDD4. As to expression, in the inner ear, specifically expressed in inner and outer hair cells (at protein level).

It localises to the nucleus. The protein resides in the nucleoplasm. The protein localises to the nucleus matrix. Its subcellular location is the cytoplasm. It is found in the cytosol. Component of the THO subcomplex of the TREX complex which is thought to couple mRNA transcription, processing and nuclear export, and which specifically associates with spliced mRNA and not with unspliced pre-mRNA. Required for efficient export of polyadenylated RNA. The THOC1-THOC2-THOC3 core complex alone is sufficient to bind export factor NXF1-NXT1 and promote ATPase activity of DDX39B. TREX is recruited to spliced mRNAs by a transcription-independent mechanism, binds to mRNA upstream of the exon-junction complex (EJC) and is recruited in a splicing- and cap-dependent manner to a region near the 5' end of the mRNA where it functions in mRNA export to the cytoplasm via the TAP/NXF1 pathway. Regulates transcriptional elongation of a subset of genes. Involved in genome stability by preventing co-transcriptional R-loop formation. May play a role in hair cell formation, hence may be involved in hearing. In terms of biological role, participates in an apoptotic pathway which is characterized by activation of caspase-6, increases in the expression of BAK1 and BCL2L1 and activation of NF-kappa-B. This pathway does not require p53/TP53, nor does the presence of p53/TP53 affect the efficiency of cell killing. Activates a G2/M cell cycle checkpoint prior to the onset of apoptosis. Apoptosis is inhibited by association with RB1. Essential for early embryonic development. Required for normal gene expression during postnatal testis development. The sequence is that of THO complex subunit 1 (Thoc1) from Mus musculus (Mouse).